The following is a 418-amino-acid chain: ATP phosphoribosyltransferase regulatory subunit (418 aa).

This sequence belongs to the class-II aminoacyl-tRNA synthetase family. HisZ subfamily. As to quaternary structure, heteromultimer composed of HisG and HisZ subunits.

The protein resides in the cytoplasm. It functions in the pathway amino-acid biosynthesis; L-histidine biosynthesis; L-histidine from 5-phospho-alpha-D-ribose 1-diphosphate: step 1/9. Functionally, required for the first step of histidine biosynthesis. May allow the feedback regulation of ATP phosphoribosyltransferase activity by histidine. This chain is ATP phosphoribosyltransferase regulatory subunit, found in Acetivibrio thermocellus (strain ATCC 27405 / DSM 1237 / JCM 9322 / NBRC 103400 / NCIMB 10682 / NRRL B-4536 / VPI 7372) (Clostridium thermocellum).